Reading from the N-terminus, the 171-residue chain is Orotate phosphoribosyltransferase (171 aa).

5-phospho-alpha-D-ribose 1-diphosphate contacts are provided by residues Arg-85, Lys-86, Arg-88, His-90, and 110-118; that span reads EDVVTTGNS. Residues Thr-114 and Arg-142 each contribute to the orotate site.

This sequence belongs to the purine/pyrimidine phosphoribosyltransferase family. PyrE subfamily. Homodimer. It depends on Mg(2+) as a cofactor.

It catalyses the reaction orotidine 5'-phosphate + diphosphate = orotate + 5-phospho-alpha-D-ribose 1-diphosphate. It functions in the pathway pyrimidine metabolism; UMP biosynthesis via de novo pathway; UMP from orotate: step 1/2. Catalyzes the transfer of a ribosyl phosphate group from 5-phosphoribose 1-diphosphate to orotate, leading to the formation of orotidine monophosphate (OMP). The sequence is that of Orotate phosphoribosyltransferase from Thermoplasma acidophilum (strain ATCC 25905 / DSM 1728 / JCM 9062 / NBRC 15155 / AMRC-C165).